The sequence spans 239 residues: Transcriptional regulatory protein BtsR (239 aa).

The 114-residue stretch at 3–116 (KVLIVDDEPL…RLEKTLARLR (114 aa)) folds into the Response regulatory domain. A 4-aspartylphosphate modification is found at D54. Positions 137–239 (IPCTGHSRIY…LKSLKEAIGL (103 aa)) constitute an HTH LytTR-type domain.

Post-translationally, phosphorylated by BtsS.

In terms of biological role, member of the two-component regulatory system BtsS/BtsR. BtsR regulates expression of btsT by binding to its promoter region. The protein is Transcriptional regulatory protein BtsR of Shigella flexneri.